A 212-amino-acid chain; its full sequence is Interleukin-6 (212 aa).

The N-terminal stretch at 1-27 (MNSVSTSAFGPVAFSLGLLLVLPAAFP) is a signal peptide. The cysteines at positions 72 and 78 are disulfide-linked. The N-linked (GlcNAc...) asparagine glycan is linked to Asn-73. Phosphoserine is present on Ser-81. Cys-101 and Cys-111 are disulfide-bonded. Asn-172 is a glycosylation site (N-linked (GlcNAc...) asparagine).

It belongs to the IL-6 superfamily. In terms of assembly, component of a hexamer of two molecules each of IL6, IL6R and IL6ST; first binds to IL6R to associate with the signaling subunit IL6ST. Interacts with IL6R (via the N-terminal ectodomain); this interaction may be affected by IL6R-binding with SORL1, hence decreasing IL6 cis signaling. Interacts with SORL1 (via the N-terminal ectodomain); this interaction leads to IL6 internalization and lysosomal degradation. May form a trimeric complex with the soluble SORL1 ectodomain and soluble IL6R receptor; this interaction might stabilize circulating IL6, hence promoting IL6 trans signaling.

It is found in the secreted. Functionally, cytokine with a wide variety of biological functions in immunity, tissue regeneration, and metabolism. Binds to IL6R, then the complex associates to the signaling subunit IL6ST/gp130 to trigger the intracellular IL6-signaling pathway. The interaction with the membrane-bound IL6R and IL6ST stimulates 'classic signaling', whereas the binding of IL6 and soluble IL6R to IL6ST stimulates 'trans-signaling'. Alternatively, 'cluster signaling' occurs when membrane-bound IL6:IL6R complexes on transmitter cells activate IL6ST receptors on neighboring receiver cells. Its function is as follows. IL6 is a potent inducer of the acute phase response. Rapid production of IL6 contributes to host defense during infection and tissue injury, but excessive IL6 synthesis is involved in disease pathology. In the innate immune response, is synthesized by myeloid cells, such as macrophages and dendritic cells, upon recognition of pathogens through toll-like receptors (TLRs) at the site of infection or tissue injury. In the adaptive immune response, is required for the differentiation of B cells into immunoglobulin-secreting cells. Plays a major role in the differentiation of CD4(+) T cell subsets. Essential factor for the development of T follicular helper (Tfh) cells that are required for the induction of germinal-center formation. Required to drive naive CD4(+) T cells to the Th17 lineage. Also required for proliferation of myeloma cells and the survival of plasmablast cells. In terms of biological role, acts as an essential factor in bone homeostasis and on vessels directly or indirectly by induction of VEGF, resulting in increased angiogenesis activity and vascular permeability. Induces, through 'trans-signaling' and synergistically with IL1B and TNF, the production of VEGF. Involved in metabolic controls, is discharged into the bloodstream after muscle contraction increasing lipolysis and improving insulin resistance. 'Trans-signaling' in central nervous system also regulates energy and glucose homeostasis. Mediates, through GLP-1, crosstalk between insulin-sensitive tissues, intestinal L cells and pancreatic islets to adapt to changes in insulin demand. Also acts as a myokine. Plays a protective role during liver injury, being required for maintenance of tissue regeneration. Also has a pivotal role in iron metabolism by regulating HAMP/hepcidin expression upon inflammation or bacterial infection. Through activation of IL6ST-YAP-NOTCH pathway, induces inflammation-induced epithelial regeneration. The polypeptide is Interleukin-6 (IL6) (Macaca thibetana (Pere David's macaque)).